A 284-amino-acid polypeptide reads, in one-letter code: Bifunctional protein FolD 1 (284 aa).

Residues 166–168 (GAS) and Ile-232 contribute to the NADP(+) site.

This sequence belongs to the tetrahydrofolate dehydrogenase/cyclohydrolase family. Homodimer.

The catalysed reaction is (6R)-5,10-methylene-5,6,7,8-tetrahydrofolate + NADP(+) = (6R)-5,10-methenyltetrahydrofolate + NADPH. It carries out the reaction (6R)-5,10-methenyltetrahydrofolate + H2O = (6R)-10-formyltetrahydrofolate + H(+). The protein operates within one-carbon metabolism; tetrahydrofolate interconversion. Catalyzes the oxidation of 5,10-methylenetetrahydrofolate to 5,10-methenyltetrahydrofolate and then the hydrolysis of 5,10-methenyltetrahydrofolate to 10-formyltetrahydrofolate. In Pseudomonas syringae pv. tomato (strain ATCC BAA-871 / DC3000), this protein is Bifunctional protein FolD 1.